The chain runs to 356 residues: Butyrate kinase (356 aa).

It belongs to the acetokinase family.

It localises to the cytoplasm. It carries out the reaction butanoate + ATP = butanoyl phosphate + ADP. It functions in the pathway lipid metabolism; butanoate metabolism. Its function is as follows. Catalyzes the conversion of butyryl-CoA through butyryl phosphate to butyrate. This chain is Butyrate kinase (buk), found in Clostridium perfringens (strain 13 / Type A).